Here is a 205-residue protein sequence, read N- to C-terminus: Holliday junction branch migration complex subunit RuvA (205 aa).

The tract at residues 1 to 64 (MIGKLKGTID…EDQLKLFGFL (64 aa)) is domain I. The tract at residues 65–143 (SALEREWFRL…AFVGEMAPSI (79 aa)) is domain II. Residues 144-153 (GLKQELGEGV) form a flexible linker region. Residues 153 to 205 (VAAAPVSDAVSALTNLGYSRDQAANAVAAALKNGGEGADSARLIRLGLKELSR) form a domain III region.

It belongs to the RuvA family. As to quaternary structure, homotetramer. Forms an RuvA(8)-RuvB(12)-Holliday junction (HJ) complex. HJ DNA is sandwiched between 2 RuvA tetramers; dsDNA enters through RuvA and exits via RuvB. An RuvB hexamer assembles on each DNA strand where it exits the tetramer. Each RuvB hexamer is contacted by two RuvA subunits (via domain III) on 2 adjacent RuvB subunits; this complex drives branch migration. In the full resolvosome a probable DNA-RuvA(4)-RuvB(12)-RuvC(2) complex forms which resolves the HJ.

It is found in the cytoplasm. Functionally, the RuvA-RuvB-RuvC complex processes Holliday junction (HJ) DNA during genetic recombination and DNA repair, while the RuvA-RuvB complex plays an important role in the rescue of blocked DNA replication forks via replication fork reversal (RFR). RuvA specifically binds to HJ cruciform DNA, conferring on it an open structure. The RuvB hexamer acts as an ATP-dependent pump, pulling dsDNA into and through the RuvAB complex. HJ branch migration allows RuvC to scan DNA until it finds its consensus sequence, where it cleaves and resolves the cruciform DNA. The chain is Holliday junction branch migration complex subunit RuvA from Sinorhizobium medicae (strain WSM419) (Ensifer medicae).